Reading from the N-terminus, the 183-residue chain is Large ribosomal subunit protein mL43 (183 aa).

Disordered regions lie at residues 120–144 (HTDNPSIQGQWTPSPTNGLPSTGCG) and 162–183 (PGALDRERDRIGSSFGFQAQAE). Positions 122–139 (DNPSIQGQWTPSPTNGLP) are enriched in polar residues. Over residues 162-172 (PGALDRERDRI) the composition is skewed to basic and acidic residues.

It belongs to the mitochondrion-specific ribosomal protein mL43 family. In terms of assembly, component of the mitochondrial ribosome large subunit (39S) which comprises a 16S rRNA and about 50 distinct proteins. Ubiquitous with the highest levels in the liver, heart and kidneys. The skeletal muscle, brain and testis showed lower but detectable expression. Expression is coregulated with TWNK.

Its subcellular location is the mitochondrion. The protein is Large ribosomal subunit protein mL43 (Mrpl43) of Mus musculus (Mouse).